Here is a 201-residue protein sequence, read N- to C-terminus: Thymidylate kinase (201 aa).

Glycine 7–threonine 14 is a binding site for ATP.

The protein belongs to the thymidylate kinase family.

It carries out the reaction dTMP + ATP = dTDP + ADP. Functionally, phosphorylation of dTMP to form dTDP in both de novo and salvage pathways of dTTP synthesis. This is Thymidylate kinase from Acholeplasma laidlawii (strain PG-8A).